The chain runs to 446 residues: N-succinylarginine dihydrolase (446 aa).

Residues 19 to 28 (SGLSYGNVAS), N110, and 137 to 138 (HR) each bind substrate. Residue E174 is part of the active site. R214 provides a ligand contact to substrate. H250 is a catalytic residue. Positions 252 and 363 each coordinate substrate. Residue C369 is the Nucleophile of the active site.

This sequence belongs to the succinylarginine dihydrolase family. In terms of assembly, homodimer.

It catalyses the reaction N(2)-succinyl-L-arginine + 2 H2O + 2 H(+) = N(2)-succinyl-L-ornithine + 2 NH4(+) + CO2. It functions in the pathway amino-acid degradation; L-arginine degradation via AST pathway; L-glutamate and succinate from L-arginine: step 2/5. In terms of biological role, catalyzes the hydrolysis of N(2)-succinylarginine into N(2)-succinylornithine, ammonia and CO(2). The sequence is that of N-succinylarginine dihydrolase from Hahella chejuensis (strain KCTC 2396).